Reading from the N-terminus, the 297-residue chain is Bifunctional protein FolD 2 (297 aa).

NADP(+)-binding positions include 172–174 (GRG), Thr199, and Val240.

Belongs to the tetrahydrofolate dehydrogenase/cyclohydrolase family. In terms of assembly, homodimer.

It carries out the reaction (6R)-5,10-methylene-5,6,7,8-tetrahydrofolate + NADP(+) = (6R)-5,10-methenyltetrahydrofolate + NADPH. The catalysed reaction is (6R)-5,10-methenyltetrahydrofolate + H2O = (6R)-10-formyltetrahydrofolate + H(+). It participates in one-carbon metabolism; tetrahydrofolate interconversion. Catalyzes the oxidation of 5,10-methylenetetrahydrofolate to 5,10-methenyltetrahydrofolate and then the hydrolysis of 5,10-methenyltetrahydrofolate to 10-formyltetrahydrofolate. The chain is Bifunctional protein FolD 2 from Paenarthrobacter aurescens (strain TC1).